Here is a 72-residue protein sequence, read N- to C-terminus: MSAIFNFQSLLTVILLLICTCAYIRSLAPSILDRNKTGLLGIFWKCARIGERKSPYVAICCIVMAFSILFIQ.

Residues 1 to 26 (MSAIFNFQSLLTVILLLICTCAYIRS) form the signal peptide. At 27 to 53 (LAPSILDRNKTGLLGIFWKCARIGERK) the chain is on the extracellular side. A glycan (N-linked (GlcNAc...) asparagine) is linked at Asn-35. A helical transmembrane segment spans residues 54 to 71 (SPYVAICCIVMAFSILFI). Position 72 (Gln-72) is a topological domain, cytoplasmic.

This sequence belongs to the KISH family.

The protein resides in the golgi apparatus membrane. Its function is as follows. Involved in the early part of the secretory pathway. This Mus musculus (Mouse) protein is Protein kish-A (Tmem167a).